Reading from the N-terminus, the 157-residue chain is Ribosomal RNA large subunit methyltransferase H (157 aa).

S-adenosyl-L-methionine contacts are provided by residues G104 and 123 to 128 (LSSLTL).

This sequence belongs to the RNA methyltransferase RlmH family. Homodimer.

The protein resides in the cytoplasm. The enzyme catalyses pseudouridine(1915) in 23S rRNA + S-adenosyl-L-methionine = N(3)-methylpseudouridine(1915) in 23S rRNA + S-adenosyl-L-homocysteine + H(+). Specifically methylates the pseudouridine at position 1915 (m3Psi1915) in 23S rRNA. This chain is Ribosomal RNA large subunit methyltransferase H, found in Nitrosococcus oceani (strain ATCC 19707 / BCRC 17464 / JCM 30415 / NCIMB 11848 / C-107).